The primary structure comprises 136 residues: Large ribosomal subunit protein eL27A (136 aa).

It belongs to the eukaryotic ribosomal protein eL27 family. As to quaternary structure, component of the large ribosomal subunit (LSU). Mature yeast ribosomes consist of a small (40S) and a large (60S) subunit. The 40S small subunit contains 1 molecule of ribosomal RNA (18S rRNA) and at least 33 different proteins. The large 60S subunit contains 3 rRNA molecules (25S, 5.8S and 5S rRNA) and at least 46 different proteins.

It is found in the cytoplasm. The protein localises to the nucleus. In terms of biological role, component of the ribosome, a large ribonucleoprotein complex responsible for the synthesis of proteins in the cell. The small ribosomal subunit (SSU) binds messenger RNAs (mRNAs) and translates the encoded message by selecting cognate aminoacyl-transfer RNA (tRNA) molecules. The large subunit (LSU) contains the ribosomal catalytic site termed the peptidyl transferase center (PTC), which catalyzes the formation of peptide bonds, thereby polymerizing the amino acids delivered by tRNAs into a polypeptide chain. The nascent polypeptides leave the ribosome through a tunnel in the LSU and interact with protein factors that function in enzymatic processing, targeting, and the membrane insertion of nascent chains at the exit of the ribosomal tunnel. The chain is Large ribosomal subunit protein eL27A (rpl2701) from Schizosaccharomyces pombe (strain 972 / ATCC 24843) (Fission yeast).